A 330-amino-acid polypeptide reads, in one-letter code: Biotin synthase (330 aa).

The Radical SAM core domain maps to 53 to 276; that stretch reads NNIRLNVLLS…VFPFKELRLS (224 aa). [4Fe-4S] cluster contacts are provided by Cys-68, Cys-72, and Cys-75. [2Fe-2S] cluster-binding residues include Cys-112, Cys-144, Cys-204, and Arg-274.

It belongs to the radical SAM superfamily. Biotin synthase family. As to quaternary structure, homodimer. Requires [4Fe-4S] cluster as cofactor. It depends on [2Fe-2S] cluster as a cofactor.

The enzyme catalyses (4R,5S)-dethiobiotin + (sulfur carrier)-SH + 2 reduced [2Fe-2S]-[ferredoxin] + 2 S-adenosyl-L-methionine = (sulfur carrier)-H + biotin + 2 5'-deoxyadenosine + 2 L-methionine + 2 oxidized [2Fe-2S]-[ferredoxin]. It participates in cofactor biosynthesis; biotin biosynthesis; biotin from 7,8-diaminononanoate: step 2/2. Functionally, catalyzes the conversion of dethiobiotin (DTB) to biotin by the insertion of a sulfur atom into dethiobiotin via a radical-based mechanism. This chain is Biotin synthase, found in Streptococcus agalactiae serotype III (strain NEM316).